The chain runs to 616 residues: Dihydroxy-acid dehydratase (616 aa).

Asp-81 contacts Mg(2+). Cys-122 is a binding site for [2Fe-2S] cluster. Residues Asp-123 and Lys-124 each contribute to the Mg(2+) site. Lys-124 is subject to N6-carboxylysine. Cys-195 contributes to the [2Fe-2S] cluster binding site. Residue Glu-491 participates in Mg(2+) binding. Ser-517 serves as the catalytic Proton acceptor.

The protein belongs to the IlvD/Edd family. Homodimer. Requires [2Fe-2S] cluster as cofactor. It depends on Mg(2+) as a cofactor.

The catalysed reaction is (2R)-2,3-dihydroxy-3-methylbutanoate = 3-methyl-2-oxobutanoate + H2O. It carries out the reaction (2R,3R)-2,3-dihydroxy-3-methylpentanoate = (S)-3-methyl-2-oxopentanoate + H2O. It functions in the pathway amino-acid biosynthesis; L-isoleucine biosynthesis; L-isoleucine from 2-oxobutanoate: step 3/4. It participates in amino-acid biosynthesis; L-valine biosynthesis; L-valine from pyruvate: step 3/4. Functionally, functions in the biosynthesis of branched-chain amino acids. Catalyzes the dehydration of (2R,3R)-2,3-dihydroxy-3-methylpentanoate (2,3-dihydroxy-3-methylvalerate) into 2-oxo-3-methylpentanoate (2-oxo-3-methylvalerate) and of (2R)-2,3-dihydroxy-3-methylbutanoate (2,3-dihydroxyisovalerate) into 2-oxo-3-methylbutanoate (2-oxoisovalerate), the penultimate precursor to L-isoleucine and L-valine, respectively. This chain is Dihydroxy-acid dehydratase, found in Escherichia coli O8 (strain IAI1).